Here is a 490-residue protein sequence, read N- to C-terminus: Dual specificity protein kinase CLK3 (490 aa).

Residues 1–138 (MHHCKRYRSP…SKRSSRSVED (138 aa)) are disordered. Y7 carries the post-translational modification Phosphotyrosine. Residues S9, S49, S51, S67, S76, and S78 each carry the phosphoserine modification. Composition is skewed to basic and acidic residues over residues 26-56 (YSRE…DRIP) and 63-76 (EHRD…EERS). Positions 88–116 (RSRHRRRSRERAPYRTRKHAHHCHKRRTR) are enriched in basic residues. Positions 117–130 (SCSSASSRSQQSSK) are enriched in low complexity. S135 carries the phosphoserine modification. In terms of domain architecture, Protein kinase spans 156 to 472 (YEIVGNLGEG…LAEALLHPFF (317 aa)). ATP contacts are provided by residues 162 to 170 (LGEGTFGKV) and K186. Residue D283 is the Proton acceptor of the active site.

Belongs to the protein kinase superfamily. CMGC Ser/Thr protein kinase family. Lammer subfamily. In terms of processing, autophosphorylates on all three types of residues. As to expression, present at high levels in testis and ovary. In testis, expression is restricted to elongated, maturing spermatozoa. Also present in spleen, brain, lung and liver (at protein level).

The protein localises to the nucleus. It is found in the cytoplasm. It localises to the cytoplasmic vesicle. The protein resides in the secretory vesicle. Its subcellular location is the acrosome. It carries out the reaction L-seryl-[protein] + ATP = O-phospho-L-seryl-[protein] + ADP + H(+). The catalysed reaction is L-threonyl-[protein] + ATP = O-phospho-L-threonyl-[protein] + ADP + H(+). It catalyses the reaction L-tyrosyl-[protein] + ATP = O-phospho-L-tyrosyl-[protein] + ADP + H(+). Leucettine L41 inhibits its kinase activity and affects the regulation of alternative splicing mediated by phosphorylation of SR proteins. Functionally, dual specificity kinase acting on both serine/threonine and tyrosine-containing substrates. Phosphorylates serine- and arginine-rich (SR) proteins of the spliceosomal complex. May be a constituent of a network of regulatory mechanisms that enable SR proteins to control RNA splicing and can cause redistribution of SR proteins from speckles to a diffuse nucleoplasmic distribution. Phosphorylates SRSF1 and SRSF3. Regulates the alternative splicing of tissue factor (F3) pre-mRNA in endothelial cells. The sequence is that of Dual specificity protein kinase CLK3 from Mus musculus (Mouse).